Consider the following 894-residue polypeptide: MGEYRLAVDIGASSGRVMAGKISEAGIDLQEVYRFDNQAQLMGGHYCWDVDHLFGEIKKGIRVAVQSGLQPVSIGMNTWAVDFVLLDEKGERLTDAISYRDPRTNGVMEGVIETYGKKALYERTGIAFQPFNTLYQLLALKKQNPELLEQAHAFLMVPDYFHFLLTGVKVNEYTNATTTQLVNVHTKDWDRQLLKEFGLPCGMFQPLQHPGTKIGSLTESMEKELGVQLEVIVPATHDTASAIAALPEKQTSVYISSGTWSLIGIENRTPICSQQAMAANFTNEGGVGSRIRFLKNIMGLWMIQEVQRLLPGHWSFSQLAQAASESTYTGEIDVDQHRFLKPENMIEEIQQACREKGLAVPESPGDLAKCIYDSLIASYDKAVTEIEAISGKPYEQIHIIGGGALNKEINQRLANRTNKTVIAGPTEATAVGNLLVQAIADGELSRIEEGRALVRTAFPVTYFLPQRSESHVSSRFESAKVQYEQLGIDVEAAFAKVKQVPISVHCWQGDDLHGTEVIANELSGGIDVTGNHPGRARNGEELRRDLEKALSLIPGKHRVNLHAMYAETDSVPIERDQLKTEHFEKWVKWAKSLGIGLDFNPTVFSHPKAADGLTLAHPDEEIRTFWINHCKACRKIAAYFGEQLGTPSLVNIWVPDGYKDTPSDRLTPRKRLKESLDAIYADEYDPMLVLDTVESKLFGIGSEAYVVGSHEFYLNYANQNNKLYLLDTGHFHPTEVVSNKLSAMLLFHDQLALHVSRPVRWDSDHVVTFDDELREIAIELVRNDALGNIHIGLDFFDASINRVAAWAIGTRNMAKALLYAALMPHRHLKQLQDEGDFTSRLAMQEQLKTYPFGDMWDEYCKRQGVPTETEWLDVVKEYEQQVQLKRESEKAKQR.

Residues 1–465 (MGEYRLAVDI…TAFPVTYFLP (465 aa)) are rhamnulokinase. Residues 466–894 (QRSESHVSSR…KRESEKAKQR (429 aa)) are L-rhamnose isomerase. Mn(2+)-binding residues include H730, D762, and D764.

The protein in the N-terminal section; belongs to the rhamnulokinase family. In the C-terminal section; belongs to the rhamnose isomerase family. The cofactor is Mn(2+).

Its subcellular location is the cytoplasm. The enzyme catalyses L-rhamnulose + ATP = L-rhamnulose 1-phosphate + ADP + H(+). The catalysed reaction is L-rhamnopyranose = L-rhamnulose. It functions in the pathway carbohydrate degradation; L-rhamnose degradation; glycerone phosphate from L-rhamnose: step 1/3. Its pathway is carbohydrate degradation; L-rhamnose degradation; glycerone phosphate from L-rhamnose: step 2/3. The chain is Bifunctional enzyme RhaA/RhaB (rhaAB) from Shouchella clausii (strain KSM-K16) (Alkalihalobacillus clausii).